We begin with the raw amino-acid sequence, 260 residues long: Triosephosphate isomerase (260 aa).

11 to 13 lines the substrate pocket; that stretch reads NWK. His-103 functions as the Electrophile in the catalytic mechanism. The active-site Proton acceptor is Glu-175. Residues Gly-181, Ser-220, and 241 to 242 each bind substrate; that span reads GG.

This sequence belongs to the triosephosphate isomerase family. As to quaternary structure, homodimer.

Its subcellular location is the cytoplasm. The catalysed reaction is D-glyceraldehyde 3-phosphate = dihydroxyacetone phosphate. Its pathway is carbohydrate biosynthesis; gluconeogenesis. It functions in the pathway carbohydrate degradation; glycolysis; D-glyceraldehyde 3-phosphate from glycerone phosphate: step 1/1. In terms of biological role, involved in the gluconeogenesis. Catalyzes stereospecifically the conversion of dihydroxyacetone phosphate (DHAP) to D-glyceraldehyde-3-phosphate (G3P). In Shewanella halifaxensis (strain HAW-EB4), this protein is Triosephosphate isomerase.